The primary structure comprises 347 residues: Protein RecA (347 aa).

An ATP-binding site is contributed by 67 to 74 (GPESSGKT).

This sequence belongs to the RecA family.

The protein localises to the cytoplasm. In terms of biological role, can catalyze the hydrolysis of ATP in the presence of single-stranded DNA, the ATP-dependent uptake of single-stranded DNA by duplex DNA, and the ATP-dependent hybridization of homologous single-stranded DNAs. It interacts with LexA causing its activation and leading to its autocatalytic cleavage. The sequence is that of Protein RecA from Helicobacter pylori (strain Shi470).